Consider the following 439-residue polypeptide: GTPase Obg (439 aa).

In terms of domain architecture, Obg spans 3–162; the sequence is GEFYDSARIF…REIELELKLL (160 aa). The OBG-type G domain occupies 163 to 333; sequence ADVGLIGFPN…LLQRVAERLR (171 aa). GTP-binding positions include 169–176, 194–198, 215–218, 285–288, and 314–316; these read GFPNAGKS, FTTLQ, DIPG, NKAD, and SAA. 2 residues coordinate Mg(2+): S176 and T196. The 78-residue stretch at 351–428 folds into the OCT domain; sequence VPEVDERLYT…IEQAAFDWED (78 aa).

Belongs to the TRAFAC class OBG-HflX-like GTPase superfamily. OBG GTPase family. In terms of assembly, monomer. It depends on Mg(2+) as a cofactor.

It localises to the cytoplasm. An essential GTPase which binds GTP, GDP and possibly (p)ppGpp with moderate affinity, with high nucleotide exchange rates and a fairly low GTP hydrolysis rate. Plays a role in control of the cell cycle, stress response, ribosome biogenesis and in those bacteria that undergo differentiation, in morphogenesis control. The chain is GTPase Obg from Roseiflexus castenholzii (strain DSM 13941 / HLO8).